Reading from the N-terminus, the 181-residue chain is MDELTAQALKAFTRRYCGAWQEKHGSWPLSEELYGVPSPCIISSTRDAVYWQPQPFEGEENVNAVERAFDIVVQPALHAFYTTQFAGDMPAQFADEKLTLLQTWSQDDFRRVQENLIGHLVTQKRLRLSPTLFIATQENELEVISICNLSGEVIKETLGTRHRIVLAATLAEFLTQLNPLL.

It belongs to the Syd family.

It is found in the cell inner membrane. Functionally, interacts with the SecY protein in vivo. May bind preferentially to an uncomplexed state of SecY, thus functioning either as a chelating agent for excess SecY in the cell or as a regulatory factor that negatively controls the translocase function. The sequence is that of Protein Syd from Salmonella arizonae (strain ATCC BAA-731 / CDC346-86 / RSK2980).